A 37-amino-acid chain; its full sequence is Cytochrome b6-f complex subunit 5 (37 aa).

Residues 5-25 form a helical membrane-spanning segment; it reads LLSGIVLGMIPVTLAGLFVTA.

It belongs to the PetG family. As to quaternary structure, the 4 large subunits of the cytochrome b6-f complex are cytochrome b6, subunit IV (17 kDa polypeptide, PetD), cytochrome f and the Rieske protein, while the 4 small subunits are PetG, PetL, PetM and PetN. The complex functions as a dimer.

The protein localises to the plastid. It localises to the chloroplast thylakoid membrane. Its function is as follows. Component of the cytochrome b6-f complex, which mediates electron transfer between photosystem II (PSII) and photosystem I (PSI), cyclic electron flow around PSI, and state transitions. PetG is required for either the stability or assembly of the cytochrome b6-f complex. This Staurastrum punctulatum (Green alga) protein is Cytochrome b6-f complex subunit 5.